Reading from the N-terminus, the 314-residue chain is Malate dehydrogenase (314 aa).

NAD(+)-binding positions include 12-17 and Asp36; that span reads GSGFTG. The substrate site is built by Arg87 and Arg93. NAD(+) is bound by residues Asn100 and 123 to 125; that span reads LTN. Asn125 provides a ligand contact to substrate. Ser149 carries the post-translational modification Phosphoserine. Position 156 (Arg156) interacts with substrate. The Proton acceptor role is filled by His180.

It belongs to the LDH/MDH superfamily. MDH type 3 family.

The enzyme catalyses (S)-malate + NAD(+) = oxaloacetate + NADH + H(+). In terms of biological role, catalyzes the reversible oxidation of malate to oxaloacetate. In Shouchella clausii (strain KSM-K16) (Alkalihalobacillus clausii), this protein is Malate dehydrogenase.